The sequence spans 308 residues: Sulfate adenylyltransferase subunit 2 (308 aa).

Belongs to the PAPS reductase family. CysD subfamily. In terms of assembly, heterodimer composed of CysD, the smaller subunit, and CysN.

The enzyme catalyses sulfate + ATP + H(+) = adenosine 5'-phosphosulfate + diphosphate. The protein operates within sulfur metabolism; hydrogen sulfide biosynthesis; sulfite from sulfate: step 1/3. Its function is as follows. With CysN forms the ATP sulfurylase (ATPS) that catalyzes the adenylation of sulfate producing adenosine 5'-phosphosulfate (APS) and diphosphate, the first enzymatic step in sulfur assimilation pathway. APS synthesis involves the formation of a high-energy phosphoric-sulfuric acid anhydride bond driven by GTP hydrolysis by CysN coupled to ATP hydrolysis by CysD. The polypeptide is Sulfate adenylyltransferase subunit 2 (Chromobacterium violaceum (strain ATCC 12472 / DSM 30191 / JCM 1249 / CCUG 213 / NBRC 12614 / NCIMB 9131 / NCTC 9757 / MK)).